The following is a 364-amino-acid chain: UDP-N-acetylglucosamine--N-acetylmuramyl-(pentapeptide) pyrophosphoryl-undecaprenol N-acetylglucosamine transferase (364 aa).

UDP-N-acetyl-alpha-D-glucosamine-binding positions include 10-12 (TGG), Asn-124, Ser-195, and Gln-295.

This sequence belongs to the glycosyltransferase 28 family. MurG subfamily.

The protein localises to the cell membrane. It carries out the reaction di-trans,octa-cis-undecaprenyl diphospho-N-acetyl-alpha-D-muramoyl-L-alanyl-D-glutamyl-meso-2,6-diaminopimeloyl-D-alanyl-D-alanine + UDP-N-acetyl-alpha-D-glucosamine = di-trans,octa-cis-undecaprenyl diphospho-[N-acetyl-alpha-D-glucosaminyl-(1-&gt;4)]-N-acetyl-alpha-D-muramoyl-L-alanyl-D-glutamyl-meso-2,6-diaminopimeloyl-D-alanyl-D-alanine + UDP + H(+). Its pathway is cell wall biogenesis; peptidoglycan biosynthesis. Cell wall formation. Catalyzes the transfer of a GlcNAc subunit on undecaprenyl-pyrophosphoryl-MurNAc-pentapeptide (lipid intermediate I) to form undecaprenyl-pyrophosphoryl-MurNAc-(pentapeptide)GlcNAc (lipid intermediate II). This Bacillus pumilus (strain SAFR-032) protein is UDP-N-acetylglucosamine--N-acetylmuramyl-(pentapeptide) pyrophosphoryl-undecaprenol N-acetylglucosamine transferase.